The following is a 178-amino-acid chain: Large ribosomal subunit protein uL6 (178 aa).

This sequence belongs to the universal ribosomal protein uL6 family. In terms of assembly, part of the 50S ribosomal subunit.

In terms of biological role, this protein binds to the 23S rRNA, and is important in its secondary structure. It is located near the subunit interface in the base of the L7/L12 stalk, and near the tRNA binding site of the peptidyltransferase center. The chain is Large ribosomal subunit protein uL6 from Lactococcus lactis subsp. cremoris (strain MG1363).